Reading from the N-terminus, the 345-residue chain is Beta-hexosaminidase (345 aa).

Substrate contacts are provided by residues Asp60, Arg68, Arg132, and 162–163 (KH). His175 functions as the Proton donor/acceptor in the catalytic mechanism. Asp247 serves as the catalytic Nucleophile.

The protein belongs to the glycosyl hydrolase 3 family. NagZ subfamily.

The protein resides in the cytoplasm. It catalyses the reaction Hydrolysis of terminal non-reducing N-acetyl-D-hexosamine residues in N-acetyl-beta-D-hexosaminides.. It functions in the pathway cell wall biogenesis; peptidoglycan recycling. Functionally, plays a role in peptidoglycan recycling by cleaving the terminal beta-1,4-linked N-acetylglucosamine (GlcNAc) from peptide-linked peptidoglycan fragments, giving rise to free GlcNAc, anhydro-N-acetylmuramic acid and anhydro-N-acetylmuramic acid-linked peptides. This is Beta-hexosaminidase from Actinobacillus pleuropneumoniae serotype 3 (strain JL03).